We begin with the raw amino-acid sequence, 149 residues long: Protein cornichon homolog 2 (149 aa).

A run of 3 helical transmembrane segments spans residues 3–23, 59–79, and 117–137; these read IELI…GLTA, ALCA…MAPV, and YFSL…TLFI.

This sequence belongs to the cornichon family.

The protein localises to the endoplasmic reticulum membrane. It is found in the golgi apparatus membrane. In terms of biological role, acts as a cargo receptor necessary for the transportation of secretory proteins from the endoplasmic reticulum (ER) in COPII-coated vesicles targeted to the Golgi apparatus. The sequence is that of Protein cornichon homolog 2 from Oryza sativa subsp. japonica (Rice).